Reading from the N-terminus, the 324-residue chain is Antihemorrhagic factor cMSF (324 aa).

The first 19 residues, 1-19, serve as a signal peptide directing secretion; sequence MHFLVALVLLGQIIGSTLS. Cystatin fetuin-A-type domains follow at residues 22 to 130 and 141 to 254; these read VRGD…VKCH and RNCL…SDCV. Positions 23-25 match the Cell attachment site motif; that stretch reads RGD. 7 cysteine pairs are disulfide-bonded: cysteine 28/cysteine 315, cysteine 85/cysteine 96, cysteine 110/cysteine 129, cysteine 143/cysteine 146, cysteine 205/cysteine 217, cysteine 230/cysteine 253, and cysteine 287/cysteine 291. N-linked (GlcNAc...) asparagine glycosylation occurs at asparagine 204. Residue asparagine 282 is glycosylated (N-linked (GlcNAc...) asparagine).

As to quaternary structure, homodimer. In terms of tissue distribution, expressed by the liver.

It is found in the secreted. Its function is as follows. Suppress hemorrhage induced by metalloproteinases from the same venom (brevilysin-H3, -H4, -H6) and from habu venom (metalloproteinases HR1A and HR1B). The non-hemorrhagic brevilysin-L4 is not inhibited by cMSF. Does not inhibit serine and cysteine proteases such as trypsin, chymotrypsin, thermolysin, and papain. The inhibition may occur by formation of a non-covalent complex between this protein and the proteinases at their metalloproteinase domains. The chain is Antihemorrhagic factor cMSF from Gloydius brevicauda (Korean slamosa snake).